Reading from the N-terminus, the 249-residue chain is DNA repair protein RecO (249 aa).

This sequence belongs to the RecO family.

Involved in DNA repair and RecF pathway recombination. The chain is DNA repair protein RecO from Afipia carboxidovorans (strain ATCC 49405 / DSM 1227 / KCTC 32145 / OM5) (Oligotropha carboxidovorans).